The primary structure comprises 473 residues: Hyaluronidase-2 (473 aa).

An N-terminal signal peptide occupies residues 1-20 (MRAGLGPIITLALVLEVAWA). Disulfide bonds link cysteine 47/cysteine 340 and cysteine 211/cysteine 227. 2 N-linked (GlcNAc...) asparagine glycosylation sites follow: asparagine 74 and asparagine 103. Glutamate 135 serves as the catalytic Proton donor. Residue asparagine 357 is glycosylated (N-linked (GlcNAc...) asparagine). In terms of domain architecture, EGF-like spans 361–439 (ATQYCSWTQC…YLGWGGEQCQ (79 aa)). 3 cysteine pairs are disulfide-bonded: cysteine 365–cysteine 376, cysteine 370–cysteine 427, and cysteine 429–cysteine 438. N-linked (GlcNAc...) asparagine glycosylation occurs at asparagine 390. A lipid anchor (GPI-anchor amidated asparagine; alternate) is attached at asparagine 448. The N-linked (GlcNAc...) asparagine; alternate glycan is linked to asparagine 448. A propeptide spans 449–473 (ASRAWAGSHLTSLLGLVAVALTWTL) (removed in mature form).

This sequence belongs to the glycosyl hydrolase 56 family. Interacts with MST1R. In terms of tissue distribution, widely expressed, with highest expression levels in kidney, lung and liver (at protein level).

The protein resides in the cell membrane. It carries out the reaction Random hydrolysis of (1-&gt;4)-linkages between N-acetyl-beta-D-glucosamine and D-glucuronate residues in hyaluronate.. In terms of biological role, catalyzes hyaluronan degradation into small fragments that are endocytosed and degraded in lysosomes by HYAL1 and exoglycosidases. Essential for the breakdown of extracellular matrix hyaluronan. This Mus musculus (Mouse) protein is Hyaluronidase-2 (Hyal2).